The chain runs to 141 residues: Putative pre-16S rRNA nuclease (141 aa).

It belongs to the YqgF nuclease family.

Its subcellular location is the cytoplasm. In terms of biological role, could be a nuclease involved in processing of the 5'-end of pre-16S rRNA. This is Putative pre-16S rRNA nuclease from Coxiella burnetii (strain CbuG_Q212) (Coxiella burnetii (strain Q212)).